Reading from the N-terminus, the 344-residue chain is Small neutral protease regulatory protein (344 aa).

In terms of domain architecture, HTH lysR-type spans 1 to 60; it reads MELEVRHLRALCAIADAGSLHRAARRLGVAQPTLSTQLTRIEQALGGPLFTRERTGCRPT. The segment at residues 20 to 39 is a DNA-binding region (H-T-H motif); the sequence is LHRAARRLGVAQPTLSTQLT. A disordered region spans residues 322–344; it reads SCGRAEGSRSRRPRDVAPPRPIG. Residues 327-338 are compositionally biased toward basic and acidic residues; it reads EGSRSRRPRDVA.

Belongs to the LysR transcriptional regulatory family.

Transcriptional activator of the gene (snpA) for the small neutral protease. In Streptomyces lividans, this protein is Small neutral protease regulatory protein (mprR).